The sequence spans 369 residues: Uroporphyrinogen decarboxylase (369 aa).

The interval 1–26 (MPVLHVDARPGSGPGGVSPPPSGAAL) is disordered. Residues 56–60 (RQAGR), aspartate 105, tyrosine 180, serine 235, and histidine 348 contribute to the substrate site.

It belongs to the uroporphyrinogen decarboxylase family. As to quaternary structure, homodimer.

Its subcellular location is the cytoplasm. The enzyme catalyses uroporphyrinogen III + 4 H(+) = coproporphyrinogen III + 4 CO2. Its pathway is porphyrin-containing compound metabolism; protoporphyrin-IX biosynthesis; coproporphyrinogen-III from 5-aminolevulinate: step 4/4. Its function is as follows. Catalyzes the decarboxylation of four acetate groups of uroporphyrinogen-III to yield coproporphyrinogen-III. This chain is Uroporphyrinogen decarboxylase, found in Frankia casuarinae (strain DSM 45818 / CECT 9043 / HFP020203 / CcI3).